We begin with the raw amino-acid sequence, 1217 residues long: DNA-directed RNA polymerase subunit beta' (1217 aa).

Zn(2+) contacts are provided by C60, C62, C75, and C78. Mg(2+)-binding residues include D449, D451, and D453. 4 residues coordinate Zn(2+): C818, C892, C899, and C902.

The protein belongs to the RNA polymerase beta' chain family. The RNAP catalytic core consists of 2 alpha, 1 beta, 1 beta' and 1 omega subunit. When a sigma factor is associated with the core the holoenzyme is formed, which can initiate transcription. Mg(2+) is required as a cofactor. Requires Zn(2+) as cofactor.

It catalyses the reaction RNA(n) + a ribonucleoside 5'-triphosphate = RNA(n+1) + diphosphate. In terms of biological role, DNA-dependent RNA polymerase catalyzes the transcription of DNA into RNA using the four ribonucleoside triphosphates as substrates. This chain is DNA-directed RNA polymerase subunit beta', found in Enterococcus faecalis (strain ATCC 700802 / V583).